Here is a 435-residue protein sequence, read N- to C-terminus: MTMASKSDSTHDESGDEAADSTEPESALETARRQLYHAASYLDIDQNIVERLKYPKKVHEVTIPIERDDGTVEVFTGYRAQHDSVRGPYKGGLRYHPDVTRDECVGLGMWMTWKCAVMDLPFGGAKGGVAVNPKELSPEEKERLTRRFTQEIRDVIGPNQDIPAPDMGTDPQTMAWLMDAYSMQEGETTPGVVTGKPPVVGGSEGREEAPGRSVAIITQLVCEYYDQPLDETTVAVQGYGSVGANAARLLDKWGATIVAISDVNGAMYEPDGIDTASVPSHDEEPEAVTTYADTVISNEELLTLDVDVLIPAALGNVITKENAEAIAADLVVEGANGPTTSTADSILADRDVAVIPDILANAGGVTVSYFEWLQDINRRAWSLERVNDELEAEMQAAWRAVKDEYENRDVTWRDAAYIVALSRIAEAHEARGLWP.

Residues 1 to 28 (MTMASKSDSTHDESGDEAADSTEPESAL) are disordered. The segment covering 14–23 (SGDEAADSTE) has biased composition (acidic residues). The active site involves Lys-126.

This sequence belongs to the Glu/Leu/Phe/Val dehydrogenases family. As to quaternary structure, homohexamer. Post-translationally, the N-terminus is blocked.

The enzyme catalyses L-glutamate + NAD(+) + H2O = 2-oxoglutarate + NH4(+) + NADH + H(+). With respect to regulation, inhibited by ethanol, acetone, acetonitrile and 2-propanol (65 to 70% inhibition) and to a lesser extent by methanol and dimethyl formamide (26 and 49 % inhibition respectively). No effect of glycerol or DMSO. The chain is NAD-specific glutamate dehydrogenase A (gdhX) from Halobacterium salinarum (Halobacterium halobium).